The following is an 83-amino-acid chain: Cytochrome b559 subunit alpha (83 aa).

A helical membrane pass occupies residues 21 to 35; it reads VIHSITIPSLFIAGW. Residue histidine 23 coordinates heme.

Belongs to the PsbE/PsbF family. In terms of assembly, heterodimer of an alpha subunit and a beta subunit. PSII is composed of 1 copy each of membrane proteins PsbA, PsbB, PsbC, PsbD, PsbE, PsbF, PsbH, PsbI, PsbJ, PsbK, PsbL, PsbM, PsbT, PsbX, PsbY, PsbZ, Psb30/Ycf12, at least 3 peripheral proteins of the oxygen-evolving complex and a large number of cofactors. It forms dimeric complexes. Heme b is required as a cofactor.

The protein resides in the plastid. It is found in the chloroplast thylakoid membrane. In terms of biological role, this b-type cytochrome is tightly associated with the reaction center of photosystem II (PSII). PSII is a light-driven water:plastoquinone oxidoreductase that uses light energy to abstract electrons from H(2)O, generating O(2) and a proton gradient subsequently used for ATP formation. It consists of a core antenna complex that captures photons, and an electron transfer chain that converts photonic excitation into a charge separation. The protein is Cytochrome b559 subunit alpha of Oenothera berteroana (Bertero's evening primrose).